Consider the following 201-residue polypeptide: MGNHLTEMAPTASSFLPHFQALHVVVIGLDSAGKTSLLYRLKFKEFVQSVPTKGFNTEKIRVPLGGSRGITFQVWDVGGQEKLRPLWRSYTRRTDGLVFVVDAAEAERLEEAKVELHRISRASDNQGVPVLVLANKQDQPGALSAAEVEKRLAVRELAAATLTHVQGCSAVDGLGLQQGLERLYEMILKRKKAARGGKKRR.

Glycine 2 carries the N-myristoyl glycine lipid modification. GTP contacts are provided by residues 28–35, 76–80, and 135–138; these read GLDSAGKT, DVGGQ, and NKQD.

This sequence belongs to the small GTPase superfamily. Arf family. In terms of assembly, interacts with CYTH2; the interaction is direct and ARL4D GTP-dependent. Does not interact with ARL4D.

The protein localises to the nucleus. It is found in the nucleolus. It localises to the cell membrane. Its subcellular location is the cytoplasm. Functionally, small GTP-binding protein which cycles between an inactive GDP-bound and an active GTP-bound form, and the rate of cycling is regulated by guanine nucleotide exchange factors (GEF) and GTPase-activating proteins (GAP). GTP-binding protein that does not act as an allosteric activator of the cholera toxin catalytic subunit. Recruits CYTH1, CYTH2, CYTH3 and CYTH4 to the plasma membrane in GDP-bound form. The sequence is that of ADP-ribosylation factor-like protein 4D (ARL4D) from Homo sapiens (Human).